The sequence spans 155 residues: SsrA-binding protein (155 aa).

The protein belongs to the SmpB family.

Its subcellular location is the cytoplasm. In terms of biological role, required for rescue of stalled ribosomes mediated by trans-translation. Binds to transfer-messenger RNA (tmRNA), required for stable association of tmRNA with ribosomes. tmRNA and SmpB together mimic tRNA shape, replacing the anticodon stem-loop with SmpB. tmRNA is encoded by the ssrA gene; the 2 termini fold to resemble tRNA(Ala) and it encodes a 'tag peptide', a short internal open reading frame. During trans-translation Ala-aminoacylated tmRNA acts like a tRNA, entering the A-site of stalled ribosomes, displacing the stalled mRNA. The ribosome then switches to translate the ORF on the tmRNA; the nascent peptide is terminated with the 'tag peptide' encoded by the tmRNA and targeted for degradation. The ribosome is freed to recommence translation, which seems to be the essential function of trans-translation. This chain is SsrA-binding protein, found in Streptococcus pneumoniae (strain Hungary19A-6).